The chain runs to 396 residues: Elongation factor Tu 1 (396 aa).

Residues 10–206 form the tr-type G domain; the sequence is KPHINVGTIG…VLDSYIPEPQ (197 aa). The interval 19–26 is G1; the sequence is GHVDHGKT. 19–26 contacts GTP; that stretch reads GHVDHGKT. Thr26 is a Mg(2+) binding site. The G2 stretch occupies residues 60-64; it reads GITIN. A G3 region spans residues 81–84; the sequence is DCPG. GTP contacts are provided by residues 81–85 and 136–139; these read DCPGH and NKAD. Positions 136–139 are G4; that stretch reads NKAD. The tract at residues 174-176 is G5; it reads SAL.

The protein belongs to the TRAFAC class translation factor GTPase superfamily. Classic translation factor GTPase family. EF-Tu/EF-1A subfamily. As to quaternary structure, monomer.

The protein resides in the cytoplasm. The catalysed reaction is GTP + H2O = GDP + phosphate + H(+). GTP hydrolase that promotes the GTP-dependent binding of aminoacyl-tRNA to the A-site of ribosomes during protein biosynthesis. This is Elongation factor Tu 1 from Nitrosomonas eutropha (strain DSM 101675 / C91 / Nm57).